Here is a 292-residue protein sequence, read N- to C-terminus: GID complex substrate-recognition subunit 10 (292 aa).

The protein belongs to the GID4/VID24 family. Substrate-recognition component of the GID/CTLH ubiquitin ligase complex. In the absence of stress, the complex exists as an inactive anticipatory complex (GID(Ant)), composed of VID30/GID1, the E3 ubiquitin-ligase RMD5/GID2, VID28/GID5, GID8, and the RING-like subunit FYV10/GID9, awaiting a substrate receptor to form the active E3 ligase complex. When cells are shifted to glucose-containing medium, the substrate receptor VID24/GID4 is induced and becomes part of the complex, named GID(SR4). Under osmotic or heat stress, the substrate receptor GID10 is induced and becomes part of the complex, named GID(SR10). Interacts with proteins that have an N-terminal Pro/N-degron, including ART2.

Functionally, substrate-recognition component of the GID E3 ligase complex recruiting N termini and catalyzing ubiquitination of proteins targeted for degradation. GID E3 is regulated through assembly with interchangeable N-degron-binding substrate receptors induced by distinct environmental perturbations. Required for the adaptation to osmotic or heat stress. Required for the regulation of protein levels of the adapter protein ART2, a component of the ART-Rsp5 ubiquitin ligase pathway, part of the plasma membrane quality control. Specific for substrates with an N-terminal Pro (Pro/N-degron), including ART2. Has high affinity for the N-terminal sequence Pro-Tyr-Ile-Thr, and also recognizes nonproline residues such as Met-Tyr-Ile-Thr-Val or Val-Cys-Phe-His. This chain is GID complex substrate-recognition subunit 10, found in Saccharomyces cerevisiae (strain ATCC 204508 / S288c) (Baker's yeast).